Reading from the N-terminus, the 109-residue chain is Nucleoid-associated protein YbaB (109 aa).

This sequence belongs to the YbaB/EbfC family. In terms of assembly, homodimer.

It localises to the cytoplasm. Its subcellular location is the nucleoid. Its function is as follows. Binds to DNA and alters its conformation. May be involved in regulation of gene expression, nucleoid organization and DNA protection. This Escherichia coli O127:H6 (strain E2348/69 / EPEC) protein is Nucleoid-associated protein YbaB.